The sequence spans 399 residues: Methylthioribose kinase (399 aa).

ATP contacts are provided by residues Asn40, Lys57, and 111 to 113 (EDL). Residue Asp229 participates in substrate binding. 246-248 (DAE) serves as a coordination point for ATP. A substrate-binding site is contributed by Arg344.

The protein belongs to the methylthioribose kinase family. In terms of assembly, homodimer.

It carries out the reaction 5-(methylsulfanyl)-D-ribose + ATP = 5-(methylsulfanyl)-alpha-D-ribose 1-phosphate + ADP + H(+). The protein operates within amino-acid biosynthesis; L-methionine biosynthesis via salvage pathway; S-methyl-5-thio-alpha-D-ribose 1-phosphate from S-methyl-5'-thioadenosine (hydrolase route): step 2/2. Its function is as follows. Catalyzes the phosphorylation of methylthioribose into methylthioribose-1-phosphate. The chain is Methylthioribose kinase from Cronobacter sakazakii (strain ATCC BAA-894) (Enterobacter sakazakii).